Reading from the N-terminus, the 473-residue chain is Kremen protein 1 (473 aa).

The N-terminal stretch at 1 to 19 is a signal peptide; that stretch reads MAPPAARLALLSAAALTLA. At 21 to 392 the chain is on the extracellular side; that stretch reads RPAPGPRPSP…ASGHRVEGWT (372 aa). The 84-residue stretch at 31-114 folds into the Kringle domain; the sequence is ECFTANGADY…YWKYCEIPAC (84 aa). 8 disulfide bridges follow: Cys32-Cys114, Cys55-Cys95, Cys84-Cys109, Cys122-Cys186, Cys147-Cys167, Cys151-Cys169, Cys190-Cys198, and Cys214-Cys240. N-linked (GlcNAc...) asparagine glycosylation occurs at Asn59. One can recognise a WSC domain in the interval 116–210; that stretch reads MPGNLGCYKD…DGRIILFDTL (95 aa). The CUB domain maps to 214-321; sequence CGGNYSSMAA…QGFAVLYQAT (108 aa). N-linked (GlcNAc...) asparagine glycans are attached at residues Asn217, Asn255, Asn293, Asn333, and Asn345. Residues 393–413 form a helical membrane-spanning segment; it reads VYGLATLLILTVTAVVAKILL. At 414–473 the chain is on the cytoplasmic side; that stretch reads HVTFKSHRVTASGDLRDCRQPGTSGEIWTIFYEPSTTISIFKKKLKGQSQQDDRNPLVSD. Positions 414–473 are essential for apoptotic activity; sequence HVTFKSHRVTASGDLRDCRQPGTSGEIWTIFYEPSTTISIFKKKLKGQSQQDDRNPLVSD.

In terms of assembly, forms a ternary complex with DKK1 and LRP6. Interacts with LRP6 in a DKK1-dependent manner. Interacts with DKK1 and RSPO1 (via FU repeats).

Its subcellular location is the cell membrane. In terms of biological role, receptor for Dickkopf proteins. Cooperates with DKK1/2 to inhibit Wnt/beta-catenin signaling by promoting the endocytosis of Wnt receptors LRP5 and LRP6. In the absence of DKK1, potentiates Wnt-beta-catenin signaling by maintaining LRP5 or LRP6 at the cell membrane. Can trigger apoptosis in a Wnt-independent manner and this apoptotic activity is inhibited upon binding of the ligand DKK1. Plays a role in limb development; attenuates Wnt signaling in the developing limb to allow normal limb patterning and can also negatively regulate bone formation. Modulates cell fate decisions in the developing cochlea with an inhibitory role in hair cell fate specification. The chain is Kremen protein 1 (Kremen1) from Rattus norvegicus (Rat).